The chain runs to 257 residues: MASAATEGEKGSPVVVGLLVVGNIIILLSGLALFAETVWVTADQYRVYPLMGVSGKDDVFAGAWIAIFCGFSFFVVASFGVGAALCRRRYMILTYLLLMLIVYIFECASCITSYTHRDYMVSNPSLITKQMLTYYSADTDQGQELTRLWDRIMIEQECCGTSGPMDWVNYTSAFRAATPEVVFPWPPLCCRRTGNFIPINEDGCRVGHMDYLFTKGCFEHIGHAIDSYTWGISWFGFAILMWTLPVMLIAMYFYTTL.

The Cytoplasmic segment spans residues 1-13 (MASAATEGEKGSP). A helical membrane pass occupies residues 14–34 (VVVGLLVVGNIIILLSGLALF). Residues 35–58 (AETVWVTADQYRVYPLMGVSGKDD) are Extracellular-facing. Residues 59–85 (VFAGAWIAIFCGFSFFVVASFGVGAAL) traverse the membrane as a helical segment. The Cytoplasmic segment spans residues 86–90 (CRRRY). A helical transmembrane segment spans residues 91–111 (MILTYLLLMLIVYIFECASCI). Residues 112–229 (TSYTHRDYMV…HIGHAIDSYT (118 aa)) lie on the Extracellular side of the membrane. Asn169 carries an N-linked (GlcNAc...) asparagine glycan. The chain crosses the membrane as a helical span at residues 230-251 (WGISWFGFAILMWTLPVMLIAM). Residues 252-257 (YFYTTL) are Cytoplasmic-facing.

Belongs to the tetraspanin (TM4SF) family. As to quaternary structure, homodimer; disulfide-linked. Interacts with uroplakin-2 (UPK2). Binds to uropathogenic E.coli fimH.

Its subcellular location is the membrane. Its function is as follows. Component of the asymmetric unit membrane (AUM); a highly specialized biomembrane elaborated by terminally differentiated urothelial cells. May play an important role in normal bladder epithelial physiology, possibly in regulating membrane permeability of superficial umbrella cells or in stabilizing the apical membrane through AUM/cytoskeletal interactions. This is Uroplakin-1a (Upk1a) from Mus musculus (Mouse).